The primary structure comprises 547 residues: Chaperonin GroEL (547 aa).

Residues 30 to 33, Lys51, 87 to 91, Gly415, and Asp496 contribute to the ATP site; these read TLGP and DGTTT.

It belongs to the chaperonin (HSP60) family. As to quaternary structure, forms a cylinder of 14 subunits composed of two heptameric rings stacked back-to-back. Interacts with the co-chaperonin GroES.

The protein localises to the cytoplasm. The catalysed reaction is ATP + H2O + a folded polypeptide = ADP + phosphate + an unfolded polypeptide.. Functionally, together with its co-chaperonin GroES, plays an essential role in assisting protein folding. The GroEL-GroES system forms a nano-cage that allows encapsulation of the non-native substrate proteins and provides a physical environment optimized to promote and accelerate protein folding. In Actinobacillus succinogenes (strain ATCC 55618 / DSM 22257 / CCUG 43843 / 130Z), this protein is Chaperonin GroEL.